Consider the following 359-residue polypeptide: Non-classical arabinogalactan protein 31 (359 aa).

The first 24 residues, Met1–Thr24, serve as a signal peptide directing secretion. Residues Thr31–Pro215 are disordered. Over residues His44 to Pro66 the composition is skewed to basic residues. Pro residues predominate over residues Pro67–Pro215. 42 positions are modified to 4-hydroxyproline: Pro71, Pro75, Pro79, Pro82, Pro83, Pro87, Pro91, Pro95, Pro99, Pro103, Pro107, Pro111, Pro114, Pro115, Pro119, Pro123, Pro127, Pro131, Pro135, Pro139, Pro143, Pro147, Pro151, Pro155, Pro159, Pro163, Pro167, Pro171, Pro175, Pro179, Pro183, Pro186, Pro187, Pro191, Pro195, Pro199, Pro203, Pro207, Pro210, Pro211, Pro215, and Pro219. Pro71, Pro75, Pro79, Pro82, Pro83, Pro87, Pro91, Pro95, Pro99, Pro103, Pro107, Pro111, Pro114, Pro115, Pro119, Pro123, Pro127, Pro131, Pro135, Pro139, Pro143, Pro147, Pro151, Pro155, Pro159, Pro163, Pro167, Pro171, Pro175, Pro179, Pro183, Pro186, Pro187, Pro191, Pro195, Pro199, Pro203, Pro207, Pro210, Pro211, Pro215, and Pro219 each carry an O-linked (Ara...) hydroxyproline glycan. Repeat 1 spans residues Pro90–Lys109. 3 consecutive repeat copies span residues Pro122–Lys141, Pro142–Lys161, and Pro162–Lys181. Asn226 and Asn269 each carry an N-linked (GlcNAc...) asparagine glycan.

Belongs to the non-classical AGP family. Post-translationally, hydroxylated on numerous prolines in the proline-rich region. O-glycosylated on numerous hydroxyprolines in the proline-rich region; noncontiguous hydroxylproline residues are glycosylated with arabinogalactan. As to expression, expressed in vascular bundles of roots, leaves, sepals and stamen filaments, and pistils but not stigma.

It localises to the secreted. The protein resides in the cell wall. Proteoglycan that may contribute to the strengthening of cell walls. This Arabidopsis thaliana (Mouse-ear cress) protein is Non-classical arabinogalactan protein 31.